The chain runs to 216 residues: Endoplasmic reticulum vesicle protein 25 (216 aa).

The signal sequence occupies residues 1–25; sequence MGSSRLAMRSALGLFFLLFVQISLA. Residues 26-185 lie on the Lumenal side of the membrane; that stretch reads LKFDIAAGKG…TNESTNERVK (160 aa). In terms of domain architecture, GOLD spans 36–126; the sequence is ERCIRNFVLK…HRSIELDVDI (91 aa). Residues 186–206 form a helical membrane-spanning segment; it reads WFAFGTMGMLVGLGVWQVIYL. Topologically, residues 207-216 are cytoplasmic; that stretch reads RAYFRSKHLI.

This sequence belongs to the EMP24/GP25L family.

The protein resides in the endoplasmic reticulum membrane. Its subcellular location is the golgi apparatus membrane. Constituent of COPII-coated endoplasmic reticulum-derived transport vesicles. Required for efficient transport of a subset of secretory proteins to the Golgi. Facilitates retrograde transport from the Golgi to the endoplasmic reticulum. This Emericella nidulans (strain FGSC A4 / ATCC 38163 / CBS 112.46 / NRRL 194 / M139) (Aspergillus nidulans) protein is Endoplasmic reticulum vesicle protein 25 (erv25).